We begin with the raw amino-acid sequence, 284 residues long: 2,3,4,5-tetrahydropyridine-2,6-dicarboxylate N-succinyltransferase (284 aa).

Residues R111 and D148 each contribute to the substrate site.

The protein belongs to the transferase hexapeptide repeat family. In terms of assembly, homotrimer.

It localises to the cytoplasm. It carries out the reaction (S)-2,3,4,5-tetrahydrodipicolinate + succinyl-CoA + H2O = (S)-2-succinylamino-6-oxoheptanedioate + CoA. Its pathway is amino-acid biosynthesis; L-lysine biosynthesis via DAP pathway; LL-2,6-diaminopimelate from (S)-tetrahydrodipicolinate (succinylase route): step 1/3. The protein is 2,3,4,5-tetrahydropyridine-2,6-dicarboxylate N-succinyltransferase of Mesorhizobium japonicum (strain LMG 29417 / CECT 9101 / MAFF 303099) (Mesorhizobium loti (strain MAFF 303099)).